The chain runs to 163 residues: Transcription elongation factor GreB (163 aa).

Residues Gly54–Val76 adopt a coiled-coil conformation.

The protein belongs to the GreA/GreB family. GreB subfamily.

In terms of biological role, necessary for efficient RNA polymerase transcription elongation past template-encoded arresting sites. The arresting sites in DNA have the property of trapping a certain fraction of elongating RNA polymerases that pass through, resulting in locked ternary complexes. Cleavage of the nascent transcript by cleavage factors such as GreA or GreB allows the resumption of elongation from the new 3'terminus. GreB releases sequences of up to 9 nucleotides in length. This is Transcription elongation factor GreB from Neisseria meningitidis serogroup B (strain ATCC BAA-335 / MC58).